We begin with the raw amino-acid sequence, 192 residues long: MLKKSLAALALGTALLSAGQAMAADYVIDKEGQHAFVDFKISHLGYSFIHGTFKDWDGTFSFDAAKPEASKINVELKTASLFTNHAERDKHISSKDFLDVAKYPEAKFVSTAVKSTGEKTADVTGDLTLHGVTKPIVIKATFNGEGKDPWGGYRAGFNGTSTLNLNDFGIKGPGPTSQTLDLDITFEGVQKK.

The N-terminal stretch at 1-23 (MLKKSLAALALGTALLSAGQAMA) is a signal peptide.

The protein belongs to the UPF0312 family. Type 1 subfamily.

The protein localises to the periplasm. This is UPF0312 protein PSPTO_5071 from Pseudomonas syringae pv. tomato (strain ATCC BAA-871 / DC3000).